The following is a 1977-amino-acid chain: Protein rotatin homolog (1977 aa).

The segment at 141 to 166 (SVSSLSSNDIPSQATESADSSSNQIY) is disordered.

This sequence belongs to the rotatin family. In terms of assembly, interacts with Rcd4;this complex is recruited to daughter centrioles before their conversion to centrosomes.

Its subcellular location is the cytoplasm. The protein resides in the cytoskeleton. It is found in the microtubule organizing center. It localises to the centrosome. The protein localises to the centriole. Functionally, participes in the structural integrity of both centrioles and basal bodies and in centriole cohesion. Participates in the later stages of centriole assembly through the interaction with Rcd4 leading to the centriole to centrosome conversion. The sequence is that of Protein rotatin homolog from Drosophila melanogaster (Fruit fly).